A 567-amino-acid chain; its full sequence is Platelet glycoprotein V (567 aa).

A signal peptide spans 1-16 (MLRSALLSAVLPLLRA). The region spanning 17-50 (QPFPCPKTCKCVVRDAAQCSGGSVAHIAELGLPT) is the LRRNT domain. Residues 17–522 (QPFPCPKTCK…ESPNNRLYWG (506 aa)) lie on the Extracellular side of the membrane. N-linked (GlcNAc...) asparagine glycosylation is found at Asn-51 and Asn-67. 14 LRR repeats span residues 75 to 96 (VLQR…TFND), 99 to 120 (KLKT…ILDK), 123 to 144 (LLEQ…LFQQ), 147 to 168 (NLQE…LFSS), 171 to 193 (ELKL…LGAQ), 195 to 216 (KLEK…LLSN), 219 to 240 (ALTE…AFDR), 243 to 264 (NLSS…LFLH), 267 to 288 (SVSR…LFGE), 291 to 312 (GLRE…AFRN), 315 to 337 (GLQT…VFQG), 340 to 361 (ELRV…ALRG), 364 to 385 (HLRQ…LFRN), and 388 to 409 (SLES…VFAA). Asn-181 is a glycosylation site (N-linked (GlcNAc...) asparagine). Asn-243 is a glycosylation site (N-linked (GlcNAc...) asparagine). Residues Asn-298 and Asn-312 are each glycosylated (N-linked (GlcNAc...) asparagine). The N-linked (GlcNAc...) asparagine glycan is linked to Asn-385. One can recognise an LRRCT domain in the interval 421-474 (NPWLCDCGLWRFLQWLRHHPDILGRDEPPQCRGPEPRASLSFWELLQGDPWCPD). Residues 523–543 (LYILLLVAQAIIAAFIVFAMI) form a helical membrane-spanning segment. The Cytoplasmic portion of the chain corresponds to 544–567 (KIGQLFRTLIREKLLLEAMGKSCN).

It is found in the membrane. The GPIb-V-IX complex functions as the vWF receptor and mediates vWF-dependent platelet adhesion to blood vessels. The adhesion of platelets to injured vascular surfaces in the arterial circulation is a critical initiating event in hemostasis. In Mus musculus (Mouse), this protein is Platelet glycoprotein V (Gp5).